Reading from the N-terminus, the 100-residue chain is Integration host factor subunit alpha (100 aa).

The tract at residues 54–73 (DLRDKRQRPGRNPKTGEEIP) is disordered.

The protein belongs to the bacterial histone-like protein family. In terms of assembly, heterodimer of an alpha and a beta chain.

Functionally, this protein is one of the two subunits of integration host factor, a specific DNA-binding protein that functions in genetic recombination as well as in transcriptional and translational control. This Pseudomonas aeruginosa (strain UCBPP-PA14) protein is Integration host factor subunit alpha.